The chain runs to 34 residues: Protamine-Z1/Z2 (34 aa).

The segment at 1–34 (PRRRRRSSRPVRRRRRYRRSTAARRRRRVVRRRR) is disordered.

As to expression, testis.

Its subcellular location is the nucleus. The protein localises to the chromosome. Protamines substitute for histones in the chromatin of sperm during the haploid phase of spermatogenesis. They compact sperm DNA into a highly condensed, stable and inactive complex. The protein is Protamine-Z1/Z2 of Sarda orientalis (Striped bonito).